Here is a 215-residue protein sequence, read N- to C-terminus: Pyrrolidone-carboxylate peptidase (215 aa).

Catalysis depends on residues glutamate 78, cysteine 141, and histidine 165.

This sequence belongs to the peptidase C15 family. As to quaternary structure, homotetramer.

The protein localises to the cytoplasm. It catalyses the reaction Release of an N-terminal pyroglutamyl group from a polypeptide, the second amino acid generally not being Pro.. Removes 5-oxoproline from various penultimate amino acid residues except L-proline. The protein is Pyrrolidone-carboxylate peptidase of Lacticaseibacillus paracasei (strain ATCC 334 / BCRC 17002 / CCUG 31169 / CIP 107868 / KCTC 3260 / NRRL B-441) (Lactobacillus paracasei).